Consider the following 388-residue polypeptide: NADH-quinone oxidoreductase subunit D 2 (388 aa).

The protein belongs to the complex I 49 kDa subunit family. In terms of assembly, NDH-1 is composed of 14 different subunits. Subunits NuoB, C, D, E, F, and G constitute the peripheral sector of the complex.

The protein resides in the cell membrane. It carries out the reaction a quinone + NADH + 5 H(+)(in) = a quinol + NAD(+) + 4 H(+)(out). Its function is as follows. NDH-1 shuttles electrons from NADH, via FMN and iron-sulfur (Fe-S) centers, to quinones in the respiratory chain. The immediate electron acceptor for the enzyme in this species is believed to be a menaquinone. Couples the redox reaction to proton translocation (for every two electrons transferred, four hydrogen ions are translocated across the cytoplasmic membrane), and thus conserves the redox energy in a proton gradient. The protein is NADH-quinone oxidoreductase subunit D 2 of Salinispora tropica (strain ATCC BAA-916 / DSM 44818 / JCM 13857 / NBRC 105044 / CNB-440).